The chain runs to 291 residues: Pre-mRNA-splicing factor SPP381 (291 aa).

Disordered stretches follow at residues 1-99 (MSFR…PLPR) and 239-266 (EKEK…YKIT). Composition is skewed to polar residues over residues 28-41 (QNVS…SLSH) and 52-62 (TGKNRTPNDGQ). Residues 63–91 (ESNESDGSPESDESPESEESSDNSDSSDS) show a composition bias toward acidic residues. Basic and acidic residues predominate over residues 239–258 (EKEKLDHKKQRSAEKVEKSH).

Belongs to the SPP381 family. In terms of assembly, component of the U4/U6-U5 tri-snRNP complex composed of the U4, U6 and U5 snRNAs and at least PRP3, PRP4, PRP6, PRP8, PRP18, PRP31, PRP38, SNU13, SNU23, SNU66, SNU114, SPP381, SMB1, SMD1, SMD2, SMD3, SMX2, SMX3, LSM2, LSM3, LSM4, LSM5, LSM6, LSM7, LSM8, BRR2 and DIB1. Interacts with PRP38.

It is found in the nucleus. Functionally, component of the spliceosome and rRNA processing machinery. In association with the spliceosomal U4/U6.U5 tri-snRNP particle, required for splicing of pre-mRNA. This Saccharomyces cerevisiae (strain ATCC 204508 / S288c) (Baker's yeast) protein is Pre-mRNA-splicing factor SPP381 (SPP381).